The primary structure comprises 282 residues: Bifunctional protein FolD (282 aa).

NADP(+) is bound by residues 166 to 168 (GAS) and Ile232.

Belongs to the tetrahydrofolate dehydrogenase/cyclohydrolase family. Homodimer.

The enzyme catalyses (6R)-5,10-methylene-5,6,7,8-tetrahydrofolate + NADP(+) = (6R)-5,10-methenyltetrahydrofolate + NADPH. It catalyses the reaction (6R)-5,10-methenyltetrahydrofolate + H2O = (6R)-10-formyltetrahydrofolate + H(+). It functions in the pathway one-carbon metabolism; tetrahydrofolate interconversion. Functionally, catalyzes the oxidation of 5,10-methylenetetrahydrofolate to 5,10-methenyltetrahydrofolate and then the hydrolysis of 5,10-methenyltetrahydrofolate to 10-formyltetrahydrofolate. This Histophilus somni (strain 129Pt) (Haemophilus somnus) protein is Bifunctional protein FolD.